The following is a 73-amino-acid chain: Large ribosomal subunit protein bL31 (73 aa).

Cysteine 16, cysteine 18, cysteine 37, and cysteine 40 together coordinate Zn(2+).

The protein belongs to the bacterial ribosomal protein bL31 family. Type A subfamily. As to quaternary structure, part of the 50S ribosomal subunit. Zn(2+) serves as cofactor.

Its function is as follows. Binds the 23S rRNA. The protein is Large ribosomal subunit protein bL31 of Marinobacter nauticus (strain ATCC 700491 / DSM 11845 / VT8) (Marinobacter aquaeolei).